The chain runs to 577 residues: Myb-like protein N (577 aa).

Disordered regions lie at residues 1–23 (MMTINNNNLNNSNNINNNNNIYT), 206–225 (TPFSLQCPNSPNSTSSSPLN), and 240–264 (SSSSSASSSSTSSQPPSPQTLLSSS). Low complexity predominate over residues 213–225 (PNSPNSTSSSPLN). HTH myb-type domains are found at residues 403-465 (KKST…CPAI) and 466-517 (RKGS…SREV). 2 consecutive DNA-binding regions (H-T-H motif) follow at residues 437 to 461 (WKKIALQIGGGKTGAQCAQHWKRVL) and 489 to 513 (WKNVASEIRTRTDIQCRYQYFKSCM). The region spanning 518 to 570 (PWTPKEDEILQKKVIENKQDSTKEIGWMDLSKAMARARQTKIPRTALECKIRF) is the Myb-like domain.

The protein resides in the nucleus. The sequence is that of Myb-like protein N (mybN) from Dictyostelium discoideum (Social amoeba).